The sequence spans 291 residues: Porphobilinogen deaminase (291 aa).

Position 237 is an S-(dipyrrolylmethanemethyl)cysteine (C237).

The protein belongs to the HMBS family. Monomer. Requires dipyrromethane as cofactor.

It catalyses the reaction 4 porphobilinogen + H2O = hydroxymethylbilane + 4 NH4(+). It participates in porphyrin-containing compound metabolism; protoporphyrin-IX biosynthesis; coproporphyrinogen-III from 5-aminolevulinate: step 2/4. Its function is as follows. Tetrapolymerization of the monopyrrole PBG into the hydroxymethylbilane pre-uroporphyrinogen in several discrete steps. This Clostridium perfringens (strain ATCC 13124 / DSM 756 / JCM 1290 / NCIMB 6125 / NCTC 8237 / Type A) protein is Porphobilinogen deaminase.